A 159-amino-acid chain; its full sequence is 6,7-dimethyl-8-ribityllumazine synthase (159 aa).

Residues tryptophan 26, 57–59 (ALE), and 79–81 (CVI) each bind 5-amino-6-(D-ribitylamino)uracil. Position 84 to 85 (84 to 85 (GT)) interacts with (2S)-2-hydroxy-3-oxobutyl phosphate. Residue histidine 87 is the Proton donor of the active site. Residue asparagine 112 participates in 5-amino-6-(D-ribitylamino)uracil binding. Arginine 126 is a binding site for (2S)-2-hydroxy-3-oxobutyl phosphate.

The protein belongs to the DMRL synthase family.

The enzyme catalyses (2S)-2-hydroxy-3-oxobutyl phosphate + 5-amino-6-(D-ribitylamino)uracil = 6,7-dimethyl-8-(1-D-ribityl)lumazine + phosphate + 2 H2O + H(+). It functions in the pathway cofactor biosynthesis; riboflavin biosynthesis; riboflavin from 2-hydroxy-3-oxobutyl phosphate and 5-amino-6-(D-ribitylamino)uracil: step 1/2. Its function is as follows. Catalyzes the formation of 6,7-dimethyl-8-ribityllumazine by condensation of 5-amino-6-(D-ribitylamino)uracil with 3,4-dihydroxy-2-butanone 4-phosphate. This is the penultimate step in the biosynthesis of riboflavin. This is 6,7-dimethyl-8-ribityllumazine synthase from Corynebacterium efficiens (strain DSM 44549 / YS-314 / AJ 12310 / JCM 11189 / NBRC 100395).